Consider the following 409-residue polypeptide: NADH-ubiquinone oxidoreductase chain 4 (409 aa).

Transmembrane regions (helical) follow at residues 9–29, 44–64, 68–88, 90–110, 125–145, 160–180, 194–214, 221–241, 246–268, 273–295, 305–325, 352–372, and 389–409; these read LYFF…GFVA, SFSF…VLLS, FMLL…FVPS, VILM…MILG, IFYA…SFFF, VFVL…HLWL, LLAG…LGCL, VWIV…MFQS, LAAY…IIMS, GVIL…GEFY, YMSS…VVFL, FSFW…IYLL, and VGFS…SVFF.

It belongs to the complex I subunit 4 family.

The protein resides in the mitochondrion membrane. It catalyses the reaction a ubiquinone + NADH + 5 H(+)(in) = a ubiquinol + NAD(+) + 4 H(+)(out). Core subunit of the mitochondrial membrane respiratory chain NADH dehydrogenase (Complex I) that is believed to belong to the minimal assembly required for catalysis. Complex I functions in the transfer of electrons from NADH to the respiratory chain. The immediate electron acceptor for the enzyme is believed to be ubiquinone. The sequence is that of NADH-ubiquinone oxidoreductase chain 4 (ND4) from Ascaris suum (Pig roundworm).